We begin with the raw amino-acid sequence, 240 residues long: Ubiquinone biosynthesis O-methyltransferase (240 aa).

Positions 44, 64, 85, and 129 each coordinate S-adenosyl-L-methionine.

It belongs to the methyltransferase superfamily. UbiG/COQ3 family.

The enzyme catalyses a 3-demethylubiquinol + S-adenosyl-L-methionine = a ubiquinol + S-adenosyl-L-homocysteine + H(+). It catalyses the reaction a 3-(all-trans-polyprenyl)benzene-1,2-diol + S-adenosyl-L-methionine = a 2-methoxy-6-(all-trans-polyprenyl)phenol + S-adenosyl-L-homocysteine + H(+). It participates in cofactor biosynthesis; ubiquinone biosynthesis. Its function is as follows. O-methyltransferase that catalyzes the 2 O-methylation steps in the ubiquinone biosynthetic pathway. This chain is Ubiquinone biosynthesis O-methyltransferase, found in Escherichia coli O157:H7.